The sequence spans 344 residues: 2,3,4,5-tetrahydropyridine-2,6-dicarboxylate N-succinyltransferase (344 aa).

Glutamate 205 provides a ligand contact to Mg(2+). Glutamate 221 (acyl-anhydride intermediate) is an active-site residue. Residues arginine 223, glycine 238, serine 241, alanine 264, 279 to 280 (EA), 287 to 289 (GTK), lysine 304, and 317 to 320 (RRNS) each bind succinyl-CoA.

It belongs to the type 2 tetrahydrodipicolinate N-succinyltransferase family. In terms of assembly, homotrimer. Requires Magnesium ions are not essential for catalysis. as cofactor.

It localises to the cytoplasm. It carries out the reaction (S)-2,3,4,5-tetrahydrodipicolinate + succinyl-CoA + H2O = (S)-2-succinylamino-6-oxoheptanedioate + CoA. Its pathway is amino-acid biosynthesis; L-lysine biosynthesis via DAP pathway; LL-2,6-diaminopimelate from (S)-tetrahydrodipicolinate (succinylase route): step 1/3. Its activity is regulated as follows. Weakly inhibited by D-2-aminopimelate. In terms of biological role, catalyzes the conversion of the cyclic tetrahydrodipicolinate (THDP) into the acyclic N-succinyl-L-2-amino-6-oxopimelate using succinyl-CoA. Displays succinyl transferase activity with L-2-aminopimelate and succinyl-CoA as substrates. The protein is 2,3,4,5-tetrahydropyridine-2,6-dicarboxylate N-succinyltransferase of Pseudomonas aeruginosa (strain ATCC 15692 / DSM 22644 / CIP 104116 / JCM 14847 / LMG 12228 / 1C / PRS 101 / PAO1).